A 487-amino-acid chain; its full sequence is MESVALSRIGLAGLAVMGQNLALNIADKGFPISVYNRTTSKVDETLDRASNEGKLPVAGQYSPRDFVLSIQRPRSVIILVKAGAPVDQTISALSEYMEPGDCIIDGGNEWYQNTERRIVEAEKKGLLYLGMGVSGGEEGARNGPSLMPGGSFTAYNNVKDILEKVAAQVEDGPCVTYIGEGGSGNFVKMVHNGIEYGDMQLISEAYDVLKNVGGLSNDELAEIFTEWNRGELESFLVEITSDIFRVKDDYGDGELVDKILDKTGMKGTGKWTVQQAAELSVAAPTIAASLDCRYLSGLKDERENAAKVLEEAGLKEDIGSASRGVDKKRLIDDVRQALYASKICSYAQGMNLLRAKSLEKGWDLNLGEMARIWKGGCIIRAVFLDRIKKAYQRNPNLASLVVDPDFAKEMVQRQAAWRRVVGLAISAGISTPGMCASLAYFDTYRRARLPANLVQAQRDLFGAHTYERTDRPGAYHTEWTKLARKSQ.

Residue Met-1 is modified to N-acetylmethionine. Residues 13 to 18, 36 to 38, 80 to 82, and Asn-108 contribute to the NADP(+) site; these read GLAVMG, NRT, and VKA. Residues Asn-108 and 134 to 136 contribute to the substrate site; that span reads SGG. Lys-188 acts as the Proton acceptor in catalysis. Position 191–192 (191–192) interacts with substrate; that stretch reads HN. Glu-195 functions as the Proton donor in the catalytic mechanism. The substrate site is built by Tyr-196, Lys-266, Arg-293, Arg-458, and His-464.

This sequence belongs to the 6-phosphogluconate dehydrogenase family. As to quaternary structure, forms homodimer. Forms heterodimers with PGD1 or PGD2.

It is found in the plastid. The protein localises to the chloroplast. Its subcellular location is the cytoplasm. The protein resides in the cytosol. It catalyses the reaction 6-phospho-D-gluconate + NADP(+) = D-ribulose 5-phosphate + CO2 + NADPH. Its pathway is carbohydrate degradation; pentose phosphate pathway; D-ribulose 5-phosphate from D-glucose 6-phosphate (oxidative stage): step 3/3. Its function is as follows. Catalyzes the oxidative decarboxylation of 6-phosphogluconate to ribulose 5-phosphate and CO(2), with concomitant reduction of NADP to NADPH. This Arabidopsis thaliana (Mouse-ear cress) protein is 6-phosphogluconate dehydrogenase, decarboxylating 3, chloroplastic.